We begin with the raw amino-acid sequence, 872 residues long: Potassium voltage-gated channel subfamily KQT member 3 (872 aa).

A disordered region spans residues 1–43 (MGLKARRAAGAAGGGGDGGGGGGGAANPAGGDAAAAGDEERKV). The Cytoplasmic segment spans residues 1–120 (MGLKARRAAG…IYDALERPRG (120 aa)). The span at 11 to 25 (AAGGGGDGGGGGGGA) shows a compositional bias: gly residues. A compositionally biased stretch (low complexity) spans 26-36 (ANPAGGDAAAA). At T81 the chain carries Phosphothreonine. A helical membrane pass occupies residues 121 to 143 (WALLYHALVFLIVLGCLILAVLT). Over 144 to 153 (TFKEYETVSG) the chain is Extracellular. A helical membrane pass occupies residues 154 to 175 (DWLLLLETFAIFIFGAEFALRI). The Cytoplasmic segment spans residues 176 to 193 (WAAGCCCRYKGWRGRLKF). Residues 194–213 (ARKPLCMLDIFVLIASVPVV) form a helical membrane-spanning segment. Over 214 to 225 (AVGNQGNVLATS) the chain is Extracellular. The helical; Voltage-sensor transmembrane segment at 226–244 (LRSLRFLQILRMLRMDRRG) threads the bilayer. R243 provides a ligand contact to a 1,2-diacyl-sn-glycero-3-phospho-(1D-myo-inositol-4,5-bisphosphate). Residues 245-256 (GTWKLLGSAICA) are Cytoplasmic-facing. A Phosphothreonine modification is found at T246. A helical membrane pass occupies residues 257-282 (HSKELITAWYIGFLTLILSSFLVYLV). K259 provides a ligand contact to a 1,2-diacyl-sn-glycero-3-phospho-(1D-myo-inositol-4,5-bisphosphate). Residues 283–302 (EKDVPEVDAQGEEMKEEFET) lie on the Extracellular side of the membrane. Positions 303 to 315 (YADALWWGLITLA) form an intramembrane region, pore-forming. Positions 316–321 (TIGYGD) match the Selectivity filter motif. At 316-326 (TIGYGDKTPKT) the chain is on the extracellular side. Residues 327–353 (WEGRLIAATFSLIGVSFFALPAGILGS) form a helical membrane-spanning segment. The Cytoplasmic portion of the chain corresponds to 354-872 (GLALKVQEQH…SVWTPSNKPI (519 aa)). Residues 356 to 537 (ALKVQEQHRQ…RLYKKKFKET (182 aa)) form a mediates interaction with calmodulin region. K366 is a binding site for a 1,2-diacyl-sn-glycero-3-phospho-(1D-myo-inositol-4,5-bisphosphate). 2 disordered regions span residues 575–611 (GPPS…PSTS) and 764–872 (ADLQ…NKPI). Composition is skewed to polar residues over residues 587 to 600 (KGSA…QSPR) and 843 to 872 (DPFT…NKPI).

This sequence belongs to the potassium channel family. KQT (TC 1.A.1.15) subfamily. Kv7.3/KCNQ3 sub-subfamily. As to quaternary structure, heterotetramer with KCNQ2; forms heterotetrameric native M-channel responsible for the M-current. Interacts with calmodulin; the interaction is calcium-independent, constitutive and participates in the proper assembly of a functional M-channel. Heteromultimer with KCNQ5. May associate with KCNE2. Interacts with IQCJ-SCHIP1. Interacts (via the pore module) with SLC5A3/SMIT1; forms a coregulatory complex that alters ion selectivity, voltage dependence and gating kinetics of the channel. KCNQ2/KCNQ3 are ubiquitinated by NEDD4L. Ubiquitination leads to protein degradation. Degradation induced by NEDD4L is inhibited by USP36. In terms of tissue distribution, predominantly expressed in brain.

Its subcellular location is the cell membrane. It carries out the reaction K(+)(in) = K(+)(out). It catalyses the reaction Rb(+)(in) = Rb(+)(out). The catalysed reaction is Cs(+)(in) = Cs(+)(out). The enzyme catalyses Na(+)(in) = Na(+)(out). Its activity is regulated as follows. Phosphatidylinositol-4,5-bisphosphate (PIP2) potentiates the activation of KCNQ channels by enhancing the electro-mechanical coupling of the voltage-sensing domain (VSD) and the pore-forming domain (PD). In the closed state of the channel, PIP2 is anchored at the S2-S3 loop; upon channel activation, PIP2 interacts with the S4-S5 linker and is involved in channel gating. Calcium suppresses KCNQ2-KCNQ3 channel currents, with calcium-bound calmodulin inducing a change in channel configuration which leads to the reduction of channel affinity for PIP2 and subsequent current suppression. M-channel is activated by the anticonvulsant retigabine. Its function is as follows. Pore-forming subunit of the voltage-gated potassium (Kv) M-channel which is responsible for the M-current, a key controller of neuronal excitability. M-channel is composed of pore-forming subunits KCNQ2 and KCNQ3 assembled as heterotetramers. The native M-current has a slowly activating and deactivating potassium conductance which plays a critical role in determining the subthreshold electrical excitability of neurons as well as the responsiveness to synaptic inputs. M-channel is selectively permeable in vitro to other cations besides potassium, in decreasing order of affinity K(+) &gt; Rb(+) &gt; Cs(+) &gt; Na(+). M-channel association with SLC5A3/SMIT1 alters channel ion selectivity, increasing Na(+) and Cs(+) permeation relative to K(+). Suppressed by activation of M1 muscarinic acetylcholine receptors. KCNQ3 also associates with KCNQ5 to form a functional channel in vitro and may also contribute to the M-current in brain. The sequence is that of Potassium voltage-gated channel subfamily KQT member 3 from Homo sapiens (Human).